Consider the following 139-residue polypeptide: D-ribose pyranase (139 aa).

The Proton donor role is filled by His20. Residues Asp28, His106, and 128–130 (FAN) contribute to the substrate site.

Belongs to the RbsD / FucU family. RbsD subfamily. Homodecamer.

It localises to the cytoplasm. The catalysed reaction is beta-D-ribopyranose = beta-D-ribofuranose. The protein operates within carbohydrate metabolism; D-ribose degradation; D-ribose 5-phosphate from beta-D-ribopyranose: step 1/2. Catalyzes the interconversion of beta-pyran and beta-furan forms of D-ribose. The protein is D-ribose pyranase of Klebsiella pneumoniae (strain 342).